A 469-amino-acid chain; its full sequence is NADH-quinone oxidoreductase subunit N (469 aa).

The next 14 membrane-spanning stretches (helical) occupy residues 9 to 29 (PLLM…LIAG), 40 to 60 (VGVM…VQMV), 76 to 96 (ATGV…AVAG), 105 to 125 (EAET…LAGA), 128 to 148 (LLLL…LVGL), 162 to 182 (YLMG…LYGL), 201 to 221 (VAVA…AGGV), 234 to 254 (ANAT…LVAL), 265 to 285 (LAWP…GNLA), 294 to 316 (RLLG…VAGA), 327 to 347 (YLGG…ALPG), 365 to 385 (AAAL…AVFI), 402 to 422 (LAVV…RWII), and 448 to 468 (VLAA…WQLV).

Belongs to the complex I subunit 2 family. As to quaternary structure, NDH-1 is composed of 14 different subunits. Subunits NuoA, H, J, K, L, M, N constitute the membrane sector of the complex.

Its subcellular location is the cell membrane. The catalysed reaction is a quinone + NADH + 5 H(+)(in) = a quinol + NAD(+) + 4 H(+)(out). NDH-1 shuttles electrons from NADH, via FMN and iron-sulfur (Fe-S) centers, to quinones in the respiratory chain. The immediate electron acceptor for the enzyme in this species is believed to be a menaquinone. Couples the redox reaction to proton translocation (for every two electrons transferred, four hydrogen ions are translocated across the cytoplasmic membrane), and thus conserves the redox energy in a proton gradient. The chain is NADH-quinone oxidoreductase subunit N from Mycobacterium sp. (strain JLS).